A 390-amino-acid chain; its full sequence is Transforming growth factor beta-1 proprotein (390 aa).

An N-terminal signal peptide occupies residues 1–29 (MPPSGLRLLPLLLPLLWLLVLTPGRPAAG). Residues 30 to 74 (LSTCKTIDMELVKRKRIEAIRGQILSKLRLASPPSQGDVPPGPLP) form a straightjacket domain region. An arm domain region spans residues 75–271 (EAVLALYNST…ATPLERAQHL (197 aa)). Residues Asn82, Asn136, and Asn176 are each glycosylated (N-linked (GlcNAc...) asparagine). Positions 226 to 252 (DSKDNTLHVEINGFNSGRRGDLATIHG) are bowtie tail. The Cell attachment site signature appears at 244 to 246 (RGD). Disulfide bonds link Cys285/Cys294, Cys293/Cys356, Cys322/Cys387, and Cys326/Cys389.

It belongs to the TGF-beta family. In terms of assembly, homodimer; disulfide-linked. Interacts with the serine proteases, HTRA1 and HTRA3: the interaction with either inhibits TGFB1-mediated signaling and the HTRA protease activity is required for this inhibition. May interact with THSD4; this interaction may lead to sequestration by FBN1 microfibril assembly and attenuation of TGFB signaling. Interacts with CD109, DPT and ASPN. Interacts with EFEMP2. Interacts with TSKU; the interaction contributes to regulation of the hair cycle. Interacts with TGFBR3. As to quaternary structure, homodimer; disulfide-linked. Interacts with transforming growth factor beta-1 (TGF-beta-1) chain; interaction is non-covalent and maintains TGF-beta-1 in a latent state; each latency-associated peptide (LAP) monomer interacts with TGF-beta-1 in the other monomer. Interacts with LTBP1; leading to regulation of TGF-beta-1 activation. Interacts with LRRC32/GARP; leading to regulation of TGF-beta-1 activation on the surface of activated regulatory T-cells (Tregs). Interacts with LRRC33/NRROS; leading to regulation of TGF-beta-1 activation in macrophages and microglia. Interacts (via cell attachment site) with integrins ITGAV and ITGB6 (ITGAV:ITGB6), leading to release of the active TGF-beta-1. Interacts with NREP; the interaction results in a decrease in TGFB1 autoinduction. Interacts with HSP90AB1; inhibits latent TGFB1 activation. Homodimer; disulfide-linked. Interacts with TGF-beta receptors (TGFBR1 and TGFBR2), leading to signal transduction. Post-translationally, transforming growth factor beta-1 proprotein: The precursor proprotein is cleaved in the Golgi apparatus by FURIN to form Transforming growth factor beta-1 (TGF-beta-1) and Latency-associated peptide (LAP) chains, which remain non-covalently linked, rendering TGF-beta-1 inactive. N-glycosylated. Deglycosylation leads to activation of Transforming growth factor beta-1 (TGF-beta-1); mechanisms triggering deglycosylation-driven activation of TGF-beta-1 are however unclear.

It is found in the secreted. It localises to the extracellular space. The protein resides in the extracellular matrix. Functionally, transforming growth factor beta-1 proprotein: Precursor of the Latency-associated peptide (LAP) and Transforming growth factor beta-1 (TGF-beta-1) chains, which constitute the regulatory and active subunit of TGF-beta-1, respectively. In terms of biological role, required to maintain the Transforming growth factor beta-1 (TGF-beta-1) chain in a latent state during storage in extracellular matrix. Associates non-covalently with TGF-beta-1 and regulates its activation via interaction with 'milieu molecules', such as LTBP1, LRRC32/GARP and LRRC33/NRROS, that control activation of TGF-beta-1. Interaction with LRRC33/NRROS regulates activation of TGF-beta-1 in macrophages and microglia. Interaction with LRRC32/GARP controls activation of TGF-beta-1 on the surface of activated regulatory T-cells (Tregs). Interaction with integrins (ITGAV:ITGB6 or ITGAV:ITGB8) results in distortion of the Latency-associated peptide chain and subsequent release of the active TGF-beta-1. Its function is as follows. Multifunctional protein that regulates the growth and differentiation of various cell types and is involved in various processes, such as normal development, immune function, microglia function and responses to neurodegeneration. Activation into mature form follows different steps: following cleavage of the proprotein in the Golgi apparatus, Latency-associated peptide (LAP) and Transforming growth factor beta-1 (TGF-beta-1) chains remain non-covalently linked rendering TGF-beta-1 inactive during storage in extracellular matrix. At the same time, LAP chain interacts with 'milieu molecules', such as LTBP1, LRRC32/GARP and LRRC33/NRROS that control activation of TGF-beta-1 and maintain it in a latent state during storage in extracellular milieus. TGF-beta-1 is released from LAP by integrins (ITGAV:ITGB6 or ITGAV:ITGB8): integrin-binding to LAP stabilizes an alternative conformation of the LAP bowtie tail and results in distortion of the LAP chain and subsequent release of the active TGF-beta-1. Once activated following release of LAP, TGF-beta-1 acts by binding to TGF-beta receptors (TGFBR1 and TGFBR2), which transduce signal. While expressed by many cells types, TGF-beta-1 only has a very localized range of action within cell environment thanks to fine regulation of its activation by Latency-associated peptide chain (LAP) and 'milieu molecules'. Plays an important role in bone remodeling: acts as a potent stimulator of osteoblastic bone formation, causing chemotaxis, proliferation and differentiation in committed osteoblasts. Can promote either T-helper 17 cells (Th17) or regulatory T-cells (Treg) lineage differentiation in a concentration-dependent manner. At high concentrations, leads to FOXP3-mediated suppression of RORC and down-regulation of IL-17 expression, favoring Treg cell development. At low concentrations in concert with IL-6 and IL-21, leads to expression of the IL-17 and IL-23 receptors, favoring differentiation to Th17 cells. Stimulates sustained production of collagen through the activation of CREB3L1 by regulated intramembrane proteolysis (RIP). Mediates SMAD2/3 activation by inducing its phosphorylation and subsequent translocation to the nucleus. Positively regulates odontoblastic differentiation in dental papilla cells, via promotion of IPO7-mediated translocation of phosphorylated SMAD2 to the nucleus and subsequent transcription of target genes. Can induce epithelial-to-mesenchymal transition (EMT) and cell migration in various cell types. This chain is Transforming growth factor beta-1 proprotein (TGFB1), found in Sus scrofa (Pig).